We begin with the raw amino-acid sequence, 353 residues long: Lactosylceramide 4-alpha-galactosyltransferase (353 aa).

Over 1–22 (MSKPPDLLLRLLRGAPRQRVCT) the chain is Cytoplasmic. Residues 23–43 (LFIIGFKFTFFVSIMIYWHVV) traverse the membrane as a helical; Signal-anchor for type II membrane protein segment. The Lumenal segment spans residues 44 to 353 (GEPKEKGQLY…TTHEAMKMYL (310 aa)). N-linked (GlcNAc...) asparagine glycosylation occurs at Asn-121. Positions 192–194 (DTD) match the DXD motif motif. Asn-203 is a glycosylation site (N-linked (GlcNAc...) asparagine).

This sequence belongs to the glycosyltransferase 32 family. As to expression, ubiquitous. Highly expressed in kidney, heart, spleen, liver, testis and placenta.

The protein localises to the golgi apparatus membrane. It carries out the reaction a beta-D-Gal-(1-&gt;4)-beta-D-Glc-(1&lt;-&gt;1)-Cer(d18:1(4E)) + UDP-alpha-D-galactose = a globoside Gb3Cer (d18:1(4E)) + UDP + H(+). It catalyses the reaction a beta-D-Gal-(1&lt;-&gt;1')-ceramide + UDP-alpha-D-galactose = alpha-D-Gal-(1-&gt;4)-beta-D-Gal-(1&lt;-&gt;1')-Cer + UDP + H(+). Its pathway is glycolipid biosynthesis. Functionally, catalyzes the transfer of galactose from UDP-alpha-D-galactose to lactosylceramide/beta-D-galactosyl-(1-&gt;4)-beta-D-glucosyl-(1&lt;-&gt;1)-ceramide(d18:1(4E)) to produce globotriaosylceramide/globoside Gb3Cer (d18:1(4E)). Also able to transfer galactose to galactosylceramide/beta-D-Gal-(1&lt;-&gt;1')-Cer. Globoside Gb3Cer is a glycosphingolipid of the globo serie, one of the major types of neutral root structures of glycosphingolipids, that constitute a significant portion of mammalian cell membranes. Globotriaosylceramide/globoside Gb3Cer in blood and tissue cell membranes is the antigen Pk of blood histogroup P. Its function is as follows. (Microbial infection) Globotriaosylceramide is one of the cellular ligands for bacterial verotoxins. The sequence is that of Lactosylceramide 4-alpha-galactosyltransferase (A4GALT) from Homo sapiens (Human).